The following is a 509-amino-acid chain: MEELQGYLKIDRSRERDFLYPLLFQEYIYALAHDHGLNKSILYEPMENLGYDKKYSLIIVKRLITRMYQQKHLIIFTNDSNPNFFFGHNKNLDSQMISEGVAVIVELPFSLRLVSSPESKEIDKSMTTLRSIHSIFPFLEDKLLHLNHVLDILIPYPIHLELLVQTLRSWIQDAPFLHLLRFFLYKYHNWNSLITQKTKMILFFSKENQRFFLFLYNFHVYESESIFVFLRKQSYHLRSTSSRAFLDRTHFYRKIEHFFVDFRNDFHTILWLFKDPFIQYFRFQGKSILSSKGTPLLMKKWKYYLVNLWECHFYFWSQPDRIHINQLSNHFIDFLGYLSSVRPTPSAVRSQMLEKSFIIDIVIKKFDTIVPIIPLIGSLAKAKFCNFSGHPISKPAWADSSDSDIIDRFGRICRNLSHYYSGSSKKKSLYRIKYILRLSCARTLARKHKSTVRSFLKRLGSEFLEEFLMEEEQVLSFILPRISYFSKRLYKERIWYFDIIRINDLTNLS.

Belongs to the intron maturase 2 family. MatK subfamily.

The protein resides in the plastid. It is found in the chloroplast. Functionally, usually encoded in the trnK tRNA gene intron. Probably assists in splicing its own and other chloroplast group II introns. In Clematis florida (Asian virgin's bower), this protein is Maturase K.